Reading from the N-terminus, the 533-residue chain is DEAD-box ATP-dependent RNA helicase CshA (533 aa).

The Q motif motif lies at 2–30; that stretch reads TTFRELGLSDSLLQSVESMGFEEATPIQA. One can recognise a Helicase ATP-binding domain in the interval 33 to 203; the sequence is IPHALQGKDI…ERFMTEPQHI (171 aa). Position 46–53 (46–53) interacts with ATP; it reads AQTGTGKT. A DEAD box motif is present at residues 151 to 154; sequence DEAD. A Helicase C-terminal domain is found at 214–374; sequence NIQQFYLEVQ…RMDAPTLDEA (161 aa). The tract at residues 428-533 is disordered; the sequence is TTPIALTSEP…ERKHHSRPQA (106 aa). Residues 458–512 are compositionally biased toward basic and acidic residues; that stretch reads DGNRNRSRDGRGGGDGRNRDRNRDGRNRDGNRDRNRDGNRDRNRDGGSRGRRGEG. Positions 524 to 533 are enriched in basic residues; that stretch reads ERKHHSRPQA.

The protein belongs to the DEAD box helicase family. CshA subfamily. Oligomerizes, may be a member of the RNA degradosome.

It localises to the cytoplasm. The catalysed reaction is ATP + H2O = ADP + phosphate + H(+). In terms of biological role, DEAD-box RNA helicase possibly involved in RNA degradation. May work in conjunction with the cold shock proteins to ensure proper initiation of transcription at low and optimal temperatures. Unwinds dsRNA in both 5'- and 3'-directions and shows RNA-dependent ATPase activity. Probably has a somewhat redundant function with cshB, as cshA can partially complement the growth effects of a cshB deletion. Plays a role in adaptation to cold, oxididant and pH stress. The polypeptide is DEAD-box ATP-dependent RNA helicase CshA (Bacillus cereus (strain ATCC 14579 / DSM 31 / CCUG 7414 / JCM 2152 / NBRC 15305 / NCIMB 9373 / NCTC 2599 / NRRL B-3711)).